The sequence spans 162 residues: uncharacterized protein (162 aa).

A helical membrane pass occupies residues Leu7–Phe27.

Its subcellular location is the membrane. This is an uncharacterized protein from Methanocaldococcus jannaschii (strain ATCC 43067 / DSM 2661 / JAL-1 / JCM 10045 / NBRC 100440) (Methanococcus jannaschii).